An 882-amino-acid polypeptide reads, in one-letter code: Valine--tRNA ligase (882 aa).

The 'HIGH' region motif lies at 52 to 62 (PNVTGSLHMGH). The 'KMSKS' region signature appears at 539 to 543 (KMSKS). Residue K542 participates in ATP binding. The stretch at 816–882 (IDVAAERRRL…RINARLAVLQ (67 aa)) forms a coiled coil.

Belongs to the class-I aminoacyl-tRNA synthetase family. ValS type 1 subfamily. As to quaternary structure, monomer.

Its subcellular location is the cytoplasm. The enzyme catalyses tRNA(Val) + L-valine + ATP = L-valyl-tRNA(Val) + AMP + diphosphate. Functionally, catalyzes the attachment of valine to tRNA(Val). As ValRS can inadvertently accommodate and process structurally similar amino acids such as threonine, to avoid such errors, it has a 'posttransfer' editing activity that hydrolyzes mischarged Thr-tRNA(Val) in a tRNA-dependent manner. The polypeptide is Valine--tRNA ligase (Mycolicibacterium paratuberculosis (strain ATCC BAA-968 / K-10) (Mycobacterium paratuberculosis)).